The chain runs to 178 residues: 2-C-methyl-D-erythritol 2,4-cyclodiphosphate synthase (178 aa).

3 residues coordinate a divalent metal cation: aspartate 24, histidine 26, and histidine 61. Residue 24-26 (DSH) participates in 4-CDP-2-C-methyl-D-erythritol 2-phosphate binding. 150–153 (TSGE) provides a ligand contact to 4-CDP-2-C-methyl-D-erythritol 2-phosphate.

Belongs to the IspF family. In terms of assembly, homotrimer. The cofactor is a divalent metal cation.

It carries out the reaction 4-CDP-2-C-methyl-D-erythritol 2-phosphate = 2-C-methyl-D-erythritol 2,4-cyclic diphosphate + CMP. It functions in the pathway isoprenoid biosynthesis; isopentenyl diphosphate biosynthesis via DXP pathway; isopentenyl diphosphate from 1-deoxy-D-xylulose 5-phosphate: step 4/6. Its function is as follows. Involved in the biosynthesis of isopentenyl diphosphate (IPP) and dimethylallyl diphosphate (DMAPP), two major building blocks of isoprenoid compounds. Catalyzes the conversion of 4-diphosphocytidyl-2-C-methyl-D-erythritol 2-phosphate (CDP-ME2P) to 2-C-methyl-D-erythritol 2,4-cyclodiphosphate (ME-CPP) with a corresponding release of cytidine 5-monophosphate (CMP). The protein is 2-C-methyl-D-erythritol 2,4-cyclodiphosphate synthase of Chlamydia muridarum (strain MoPn / Nigg).